The chain runs to 534 residues: GMP synthase [glutamine-hydrolyzing] (534 aa).

Residues 20-210 (MLIILDFGSQ…VYHICDCEPT (191 aa)) form the Glutamine amidotransferase type-1 domain. Cys97 functions as the Nucleophile in the catalytic mechanism. Catalysis depends on residues His184 and Glu186. Residues 211–409 (WTTETFVEEA…LGLPEEIVKR (199 aa)) form the GMPS ATP-PPase domain. 238–244 (SGGVDSS) lines the ATP pocket.

As to quaternary structure, homodimer.

The catalysed reaction is XMP + L-glutamine + ATP + H2O = GMP + L-glutamate + AMP + diphosphate + 2 H(+). Its pathway is purine metabolism; GMP biosynthesis; GMP from XMP (L-Gln route): step 1/1. Functionally, catalyzes the synthesis of GMP from XMP. This Synechococcus sp. (strain ATCC 27144 / PCC 6301 / SAUG 1402/1) (Anacystis nidulans) protein is GMP synthase [glutamine-hydrolyzing].